Consider the following 562-residue polypeptide: Phosphoglucomutase-1 (562 aa).

Position 1 is an N-acetylmethionine (Met-1). Lys-16 carries the N6-acetyllysine modification. Residue Arg-23 participates in alpha-D-glucose 1,6-bisphosphate binding. Thr-115 bears the Phosphothreonine mark. Ser-117 serves as a coordination point for alpha-D-glucose 1,6-bisphosphate. Ser-117 functions as the Phosphoserine intermediate in the catalytic mechanism. Ser-117 contacts Mg(2+). Residues Ser-117 and Ser-134 each carry the phosphoserine modification. A Phosphothreonine modification is found at Thr-185. Position 213 is a phosphoserine (Ser-213). The Mg(2+) site is built by Asp-288, Asp-290, and Asp-292. Asp-292 and Arg-293 together coordinate alpha-D-glucose 1,6-bisphosphate. At Lys-349 the chain carries N6-acetyllysine. Tyr-353 is modified (phosphotyrosine). Thr-357 contacts alpha-D-glucose 1,6-bisphosphate. Ser-369 bears the Phosphoserine mark. Alpha-D-glucose 1,6-bisphosphate is bound by residues Glu-376, Ser-378, and Lys-389. Ser-378 carries the phosphoserine modification. Position 419 is an N6-succinyllysine (Lys-419). The residue at position 467 (Thr-467) is a Phosphothreonine; by PAK1. Ser-485 and Ser-505 each carry phosphoserine. Position 507 is a phosphothreonine (Thr-507). Phosphoserine occurs at positions 509 and 541.

The protein belongs to the phosphohexose mutase family. In terms of assembly, monomer. Mg(2+) is required as a cofactor. In terms of processing, isoform 2 is the major calmodulin-dependent phosphoprotein in junctional skeletal sarcoplasmic reticulum vesicles. Post-translationally, phosphorylation at Thr-467 by PAK1 significantly enhances enzymatic activity.

The protein resides in the cytoplasm. Its subcellular location is the sarcoplasmic reticulum. It catalyses the reaction alpha-D-glucose 1-phosphate = alpha-D-glucose 6-phosphate. It carries out the reaction O-phospho-L-seryl-[protein] + alpha-D-glucose 1-phosphate = alpha-D-glucose 1,6-bisphosphate + L-seryl-[protein]. The catalysed reaction is alpha-D-glucose 1,6-bisphosphate + L-seryl-[protein] = O-phospho-L-seryl-[protein] + alpha-D-glucose 6-phosphate. With respect to regulation, glucose-1,6-bisphosphate enhances phosphorylation of the active site Ser-117, and thereby increases enzyme activity. Catalyzes the reversible isomerization of alpha-D-glucose 1-phosphate to alpha-D-glucose 6-phosphate. The mechanism proceeds via the intermediate compound alpha-D-glucose 1,6-bisphosphate. This enzyme participates in both the breakdown and synthesis of glucose. This Oryctolagus cuniculus (Rabbit) protein is Phosphoglucomutase-1 (PGM1).